The following is a 778-amino-acid chain: Lon protease (778 aa).

The Lon N-terminal domain occupies 8–202 (LPLIPLRGLI…NVLTVIKDEL (195 aa)). An ATP-binding site is contributed by 354 to 361 (GPPGVGKT). One can recognise a Lon proteolytic domain in the interval 591 to 772 (EDKIGVVTGM…DTVLENALIG (182 aa)). Catalysis depends on residues Ser-678 and Lys-721.

This sequence belongs to the peptidase S16 family. As to quaternary structure, homohexamer. Organized in a ring with a central cavity.

It localises to the cytoplasm. It catalyses the reaction Hydrolysis of proteins in presence of ATP.. Functionally, ATP-dependent serine protease that mediates the selective degradation of mutant and abnormal proteins as well as certain short-lived regulatory proteins. Required for cellular homeostasis and for survival from DNA damage and developmental changes induced by stress. Degrades polypeptides processively to yield small peptide fragments that are 5 to 10 amino acids long. Binds to DNA in a double-stranded, site-specific manner. In Clostridium acetobutylicum (strain ATCC 824 / DSM 792 / JCM 1419 / IAM 19013 / LMG 5710 / NBRC 13948 / NRRL B-527 / VKM B-1787 / 2291 / W), this protein is Lon protease.